The following is a 363-amino-acid chain: Endopolygalacturonase A (363 aa).

The signal sequence occupies residues 1–20; it reads MQLLQSSVIAATVGAALVAA. Residues 21-28 constitute a propeptide that is removed on maturation; it reads VPVELEAR. Cysteine 31 and cysteine 46 form a disulfide bridge. PbH1 repeat units follow at residues 158–187, 188–209, 210–230, 239–260, 268–290, and 302–347; these read SDNL…DVGS, STYI…AINS, GSHI…SIGS, VEDV…RIKT, VSNV…IVEQ, and TNGI…SITG. Asparagine 162 carries an N-linked (GlcNAc...) asparagine glycan. Aspartate 202 (proton donor) is an active-site residue. An intrachain disulfide couples cysteine 204 to cysteine 220. Histidine 224 is an active-site residue. 2 disulfide bridges follow: cysteine 330-cysteine 335 and cysteine 354-cysteine 363.

The protein belongs to the glycosyl hydrolase 28 family.

The protein localises to the secreted. It carries out the reaction (1,4-alpha-D-galacturonosyl)n+m + H2O = (1,4-alpha-D-galacturonosyl)n + (1,4-alpha-D-galacturonosyl)m.. Functionally, involved in maceration and soft-rotting of plant tissue. Hydrolyzes the 1,4-alpha glycosidic bonds of de-esterified pectate in the smooth region of the plant cell wall. The polypeptide is Endopolygalacturonase A (pgaA) (Aspergillus flavus (strain ATCC MYA-384 / AF70)).